The sequence spans 508 residues: Protein phosphatase PP2A regulatory subunit B (508 aa).

WD repeat units lie at residues 19-58 (TEADIISTVEFDHTGDFLATGDKGGRVVLFERNQSKKKQS), 81-122 (EIEE…IKLV), 166-204 (AHAYHINSISVNSDQETYLSADDLRINLWNLGIADQSFN), 215-255 (ELTE…LCDS), 274-312 (EITSSISDVKFSHDGRYIASRDYMTVKIWDLAMENKPIK), and 329-370 (ENDA…GNDD). Residues 369-466 (DDKPKFKSAF…MRRRMTSGVG (98 aa)) are disordered. Residues 396–418 (DDDDDDDDDDDDEEADDEFDEEV) are compositionally biased toward acidic residues. Positions 447 to 461 (FKSKKSGQHPMRRRM) are enriched in basic residues. One copy of the WD 7 repeat lies at 477–507 (DFKKSILHLSWHPRENSVAIAATNNLYIFST).

Belongs to the phosphatase 2A regulatory subunit B family. In terms of assembly, PP2A exists in several trimeric forms, all of which consist of a core composed of a catalytic subunit associated with a 65 kDa (PR65) (Subunit A) and a 55 kDa (PR55) (Subunit B) regulatory subunit.

Functionally, phosphatase 2A affects a variety of biological processes in the cell such as transcription, cell cycle progression and cellular morphogenesis, and provides an initial identification of critical substrates for this phosphatase. The regulatory subunit may direct the catalytic subunit to distinct, albeit overlapping, subsets of substrates. This Candida tropicalis (Yeast) protein is Protein phosphatase PP2A regulatory subunit B (CDC55).